Consider the following 289-residue polypeptide: Pyridoxal kinase PdxY (289 aa).

Residues S9 and 44–45 (TQ) contribute to the substrate site. The ATP site is built by D112, V144, E149, and K182. D221 provides a ligand contact to substrate.

The protein belongs to the pyridoxine kinase family. PdxY subfamily. Homodimer. Mg(2+) serves as cofactor.

The enzyme catalyses pyridoxal + ATP = pyridoxal 5'-phosphate + ADP + H(+). The protein operates within cofactor metabolism; pyridoxal 5'-phosphate salvage; pyridoxal 5'-phosphate from pyridoxal: step 1/1. In terms of biological role, pyridoxal kinase involved in the salvage pathway of pyridoxal 5'-phosphate (PLP). Catalyzes the phosphorylation of pyridoxal to PLP. This chain is Pyridoxal kinase PdxY, found in Vibrio parahaemolyticus serotype O3:K6 (strain RIMD 2210633).